The primary structure comprises 358 residues: MDYTPLIEKRRQRLEELETVIAEPDFFNDQKKASEIMREHRRLKELMETWDSLNATEQQLADNQELAKTDDPELAELAALEIPELEAALEKLRSDVQYSLLPRDTTEDRDAIIEIRAGTGGDEASLFAGDLLRMYQRFAEERGWRFEHLESSPSDVGGFKEVVCRIAGEEVFRFLKYEGGVHRVQRVPATETQGRIHTSTATVAVMPEAEEVDIEIRPEDLRIEVCRSGGAGGQHVNKTESAVQIWHIPTGVYVRCEEERSQMKNREKGMKILRAKLFEAKKREEAEKYSAARRNLIGSGGREEKIRTYNFPQNRLTDHRIGYTSHNLDGILMGQLEDLIMALQHAEMQERLAEAGMS.

An N5-methylglutamine modification is found at Gln-234.

Belongs to the prokaryotic/mitochondrial release factor family. In terms of processing, methylated by PrmC. Methylation increases the termination efficiency of RF1.

It localises to the cytoplasm. Its function is as follows. Peptide chain release factor 1 directs the termination of translation in response to the peptide chain termination codons UAG and UAA. This is Peptide chain release factor 1 from Akkermansia muciniphila (strain ATCC BAA-835 / DSM 22959 / JCM 33894 / BCRC 81048 / CCUG 64013 / CIP 107961 / Muc).